Here is a 167-residue protein sequence, read N- to C-terminus: SsrA-binding protein (167 aa).

Positions 139 to 158 (QNHDKRDAAKERDWQRDKQR) are enriched in basic and acidic residues. The segment at 139 to 167 (QNHDKRDAAKERDWQRDKQRVMRRHNRDA) is disordered.

Belongs to the SmpB family.

The protein resides in the cytoplasm. In terms of biological role, required for rescue of stalled ribosomes mediated by trans-translation. Binds to transfer-messenger RNA (tmRNA), required for stable association of tmRNA with ribosomes. tmRNA and SmpB together mimic tRNA shape, replacing the anticodon stem-loop with SmpB. tmRNA is encoded by the ssrA gene; the 2 termini fold to resemble tRNA(Ala) and it encodes a 'tag peptide', a short internal open reading frame. During trans-translation Ala-aminoacylated tmRNA acts like a tRNA, entering the A-site of stalled ribosomes, displacing the stalled mRNA. The ribosome then switches to translate the ORF on the tmRNA; the nascent peptide is terminated with the 'tag peptide' encoded by the tmRNA and targeted for degradation. The ribosome is freed to recommence translation, which seems to be the essential function of trans-translation. In Xanthomonas oryzae pv. oryzae (strain MAFF 311018), this protein is SsrA-binding protein.